The sequence spans 310 residues: Malate dehydrogenase (310 aa).

NAD(+) contacts are provided by residues 7–12 (GAGNVG) and aspartate 32. Residues arginine 81 and arginine 87 each coordinate substrate. NAD(+) contacts are provided by residues asparagine 94 and 117-119 (VSN). Substrate contacts are provided by asparagine 119 and arginine 150. Residue histidine 174 is the Proton acceptor of the active site.

Belongs to the LDH/MDH superfamily. MDH type 3 family. In terms of assembly, homotetramer; arranged as a dimer of dimers.

The enzyme catalyses (S)-malate + NAD(+) = oxaloacetate + NADH + H(+). Catalyzes the reversible oxidation of malate to oxaloacetate. The sequence is that of Malate dehydrogenase from Chlorobaculum tepidum (strain ATCC 49652 / DSM 12025 / NBRC 103806 / TLS) (Chlorobium tepidum).